We begin with the raw amino-acid sequence, 729 residues long: Glycine--tRNA ligase (729 aa).

The transit peptide at 1–33 (MPCLLPSLLRATRAALPLLSPPRVVAASASQRL) directs the protein to the mitochondrion. The 57-residue stretch at 53–109 (LLAPLRLAVRQQGDFVRKLKEDKAPQVDVDRAVAELKARKRVLEAKELALQPKDDIV) folds into the WHEP-TRS domain. An N6-acetyllysine modification is found at lysine 194. Glutamate 289 provides a ligand contact to glycine. ATP contacts are provided by residues 321 to 323 (RNE) and 332 to 333 (RV). Residue glutamate 340 participates in glycine binding. Residue tyrosine 443 is modified to Phosphotyrosine. 447–448 (EI) is an ATP binding site. Lysine 491 bears the N6-acetyllysine mark. 566-568 (EPS) lines the glycine pocket. ATP is bound at residue arginine 573. At serine 690 the chain carries Phosphoserine. Threonine 726 bears the Phosphothreonine mark.

This sequence belongs to the class-II aminoacyl-tRNA synthetase family. In terms of assembly, homodimer.

It is found in the cytoplasm. The protein localises to the mitochondrion. The protein resides in the cell projection. It localises to the axon. Its subcellular location is the secreted. It is found in the extracellular exosome. The catalysed reaction is tRNA(Gly) + glycine + ATP = glycyl-tRNA(Gly) + AMP + diphosphate. The enzyme catalyses 2 ATP + H(+) = P(1),P(4)-bis(5'-adenosyl) tetraphosphate + diphosphate. Its function is as follows. Catalyzes the ATP-dependent ligation of glycine to the 3'-end of its cognate tRNA, via the formation of an aminoacyl-adenylate intermediate (Gly-AMP). Also produces diadenosine tetraphosphate (Ap4A), a universal pleiotropic signaling molecule needed for cell regulation pathways, by direct condensation of 2 ATPs. Thereby, may play a special role in Ap4A homeostasis. The protein is Glycine--tRNA ligase (Gars1) of Mus musculus (Mouse).